The sequence spans 354 residues: Serum paraoxonase/arylesterase 2 (354 aa).

Cys-42 and Cys-352 are disulfide-bonded. Ca(2+) is bound by residues Glu-53 and Asp-54. Residue His-114 is the Proton acceptor of the active site. Ca(2+) is bound by residues Ile-116, Asn-167, Asp-168, and Asn-223. Asn-254 is a glycosylation site (N-linked (GlcNAc...) asparagine). Asp-268 and Asn-269 together coordinate Ca(2+). N-linked (GlcNAc...) asparagine glycans are attached at residues Asn-269 and Asn-323.

The protein belongs to the paraoxonase family. As to quaternary structure, homotrimer. Requires Ca(2+) as cofactor. In terms of processing, glycosylated. Post-translationally, the signal sequence is not cleaved.

It is found in the membrane. It catalyses the reaction a phenyl acetate + H2O = a phenol + acetate + H(+). The enzyme catalyses an N-acyl-L-homoserine lactone + H2O = an N-acyl-L-homoserine + H(+). In terms of biological role, capable of hydrolyzing lactones and a number of aromatic carboxylic acid esters. In Rattus norvegicus (Rat), this protein is Serum paraoxonase/arylesterase 2 (Pon2).